Consider the following 51-residue polypeptide: Large ribosomal subunit protein eL40 (51 aa).

This sequence belongs to the eukaryotic ribosomal protein eL40 family.

The chain is Large ribosomal subunit protein eL40 from Thermococcus gammatolerans (strain DSM 15229 / JCM 11827 / EJ3).